Reading from the N-terminus, the 1368-residue chain is DNA-directed RNA polymerase subunit beta (1368 aa).

Belongs to the RNA polymerase beta chain family. The RNAP catalytic core consists of 2 alpha, 1 beta, 1 beta' and 1 omega subunit. When a sigma factor is associated with the core the holoenzyme is formed, which can initiate transcription.

The enzyme catalyses RNA(n) + a ribonucleoside 5'-triphosphate = RNA(n+1) + diphosphate. DNA-dependent RNA polymerase catalyzes the transcription of DNA into RNA using the four ribonucleoside triphosphates as substrates. The polypeptide is DNA-directed RNA polymerase subunit beta (Cupriavidus pinatubonensis (strain JMP 134 / LMG 1197) (Cupriavidus necator (strain JMP 134))).